A 312-amino-acid chain; its full sequence is Olfactory receptor 2T10 (312 aa).

Residues 1–25 are Extracellular-facing; the sequence is MRLANQTLGGDFFLLGIFSQISHPG. N-linked (GlcNAc...) asparagine glycosylation is present at Asn5. Residues 26-49 traverse the membrane as a helical segment; that stretch reads RLCLLIFSIFLMAVSWNITLILLI. The Cytoplasmic segment spans residues 50–57; the sequence is HIDSSLHT. A helical membrane pass occupies residues 58–79; it reads PMYFFINQLSLIDLTYISVTVP. The Extracellular segment spans residues 80–100; it reads KMLVNQLAKDKTISVLGCGTQ. A disulfide bond links Cys97 and Cys189. Residues 101–120 traverse the membrane as a helical segment; it reads MYFYLQLGGAECCLLAAMAY. Over 121–139 the chain is Cytoplasmic; that stretch reads DRYVAICHPLRYSVLMSHR. A helical membrane pass occupies residues 140 to 158; it reads VCLLLASGCWFVGSVDGFM. The Extracellular portion of the chain corresponds to 159–195; it reads LTPIAMSFPFCRSHEIQHFFCEVPAVLKLSCSDTSLY. Residues 196–219 traverse the membrane as a helical segment; it reads KIFMYLCCVIMLLIPVTVISVSYY. The Cytoplasmic portion of the chain corresponds to 220–236; that stretch reads YIILTIHKMNSVEGRKK. Residues 237 to 259 traverse the membrane as a helical segment; the sequence is AFTTCSSHITVVSLFYGAAIYNY. Topologically, residues 260–272 are extracellular; that stretch reads MLPSSYQTPEKDM. Residues 273–292 form a helical membrane-spanning segment; sequence MSSFFYTILTPVLNPIIYSF. The Cytoplasmic segment spans residues 293–312; the sequence is RNKDVTRALKKMLSVQKPPY.

This sequence belongs to the G-protein coupled receptor 1 family.

The protein localises to the cell membrane. Odorant receptor. This Homo sapiens (Human) protein is Olfactory receptor 2T10 (OR2T10).